Here is a 295-residue protein sequence, read N- to C-terminus: Regucalcin (295 aa).

A divalent metal cation is bound at residue glutamate 18. Residues arginine 100, asparagine 102, and aspartate 120 each contribute to the substrate site. Positions 150 and 200 each coordinate a divalent metal cation. Aspartate 200 (proton donor/acceptor) is an active-site residue.

The protein belongs to the SMP-30/CGR1 family. The cofactor is Zn(2+). Mn(2+) is required as a cofactor. Ca(2+) serves as cofactor. It depends on Mg(2+) as a cofactor.

Its subcellular location is the cytoplasm. It carries out the reaction D-glucono-1,5-lactone + H2O = D-gluconate + H(+). The protein operates within cofactor biosynthesis; L-ascorbate biosynthesis via UDP-alpha-D-glucuronate pathway; L-ascorbate from UDP-alpha-D-glucuronate: step 3/4. In terms of biological role, gluconolactonase with low activity towards other sugar lactones, including gulonolactone and galactonolactone. Catalyzes a key step in ascorbic acid (vitamin C) biosynthesis. Can also hydrolyze diisopropyl phosphorofluoridate and phenylacetate (in vitro). Calcium-binding protein. Modulates Ca(2+) signaling, and Ca(2+)-dependent cellular processes and enzyme activities. This chain is Regucalcin, found in Danio rerio (Zebrafish).